The following is a 146-amino-acid chain: 3-hydroxyacyl-[acyl-carrier-protein] dehydratase FabZ (146 aa).

Residue histidine 49 is part of the active site.

Belongs to the thioester dehydratase family. FabZ subfamily.

The protein resides in the cytoplasm. The catalysed reaction is a (3R)-hydroxyacyl-[ACP] = a (2E)-enoyl-[ACP] + H2O. Functionally, involved in unsaturated fatty acids biosynthesis. Catalyzes the dehydration of short chain beta-hydroxyacyl-ACPs and long chain saturated and unsaturated beta-hydroxyacyl-ACPs. The protein is 3-hydroxyacyl-[acyl-carrier-protein] dehydratase FabZ of Pseudomonas fluorescens (strain Pf0-1).